Here is a 186-residue protein sequence, read N- to C-terminus: Ribosome-recycling factor (186 aa).

2 stretches are compositionally biased toward basic and acidic residues: residues 134 to 169 (RDAN…KKAE) and 176 to 186 (AKAREAEVMED). Residues 134–186 (RDANKAAETAEKDKEMTEDDRDKTKDQVQELTKKAETNVNESAKAREAEVMED) form a disordered region.

It belongs to the RRF family.

Its subcellular location is the cytoplasm. In terms of biological role, responsible for the release of ribosomes from messenger RNA at the termination of protein biosynthesis. May increase the efficiency of translation by recycling ribosomes from one round of translation to another. The chain is Ribosome-recycling factor from Rhodopirellula baltica (strain DSM 10527 / NCIMB 13988 / SH1).